Consider the following 662-residue polypeptide: Translation factor guf1, mitochondrial (662 aa).

The transit peptide at 1-42 directs the protein to the mitochondrion; the sequence is MRGCLQLARWLSAAPNWPASSLLKAPGSSFATRLFTTTSSYK. The tr-type G domain occupies 64–244; the sequence is ERYRNFCIVA…TVVEKIPAPI (181 aa). GTP-binding positions include 73 to 80, 137 to 141, and 191 to 194; these read AHVDHGKS, DTPGH, and NKVD.

Belongs to the TRAFAC class translation factor GTPase superfamily. Classic translation factor GTPase family. LepA subfamily.

Its subcellular location is the mitochondrion inner membrane. The catalysed reaction is GTP + H2O = GDP + phosphate + H(+). Functionally, promotes mitochondrial protein synthesis. May act as a fidelity factor of the translation reaction, by catalyzing a one-codon backward translocation of tRNAs on improperly translocated ribosomes. Binds to mitochondrial ribosomes in a GTP-dependent manner. The chain is Translation factor guf1, mitochondrial (guf1) from Emericella nidulans (strain FGSC A4 / ATCC 38163 / CBS 112.46 / NRRL 194 / M139) (Aspergillus nidulans).